Reading from the N-terminus, the 301-residue chain is 4-hydroxy-tetrahydrodipicolinate synthase (301 aa).

A pyruvate-binding site is contributed by threonine 50. Catalysis depends on tyrosine 138, which acts as the Proton donor/acceptor. The active-site Schiff-base intermediate with substrate is lysine 167. Position 209 (isoleucine 209) interacts with pyruvate.

The protein belongs to the DapA family. In terms of assembly, homotetramer; dimer of dimers.

It localises to the cytoplasm. It carries out the reaction L-aspartate 4-semialdehyde + pyruvate = (2S,4S)-4-hydroxy-2,3,4,5-tetrahydrodipicolinate + H2O + H(+). The protein operates within amino-acid biosynthesis; L-lysine biosynthesis via DAP pathway; (S)-tetrahydrodipicolinate from L-aspartate: step 3/4. Functionally, catalyzes the condensation of (S)-aspartate-beta-semialdehyde [(S)-ASA] and pyruvate to 4-hydroxy-tetrahydrodipicolinate (HTPA). This is 4-hydroxy-tetrahydrodipicolinate synthase from Sorangium cellulosum (strain So ce56) (Polyangium cellulosum (strain So ce56)).